The primary structure comprises 485 residues: UDP-N-acetylmuramate--L-alanine ligase (485 aa).

129-135 (GTHGKTT) serves as a coordination point for ATP.

It belongs to the MurCDEF family.

It localises to the cytoplasm. The enzyme catalyses UDP-N-acetyl-alpha-D-muramate + L-alanine + ATP = UDP-N-acetyl-alpha-D-muramoyl-L-alanine + ADP + phosphate + H(+). Its pathway is cell wall biogenesis; peptidoglycan biosynthesis. Its function is as follows. Cell wall formation. This chain is UDP-N-acetylmuramate--L-alanine ligase, found in Vibrio parahaemolyticus serotype O3:K6 (strain RIMD 2210633).